Consider the following 356-residue polypeptide: Carminomycin 4-O-methyltransferase DauK (356 aa).

Residue R153 coordinates S-adenosyl-L-methionine. D163 contacts substrate. S-adenosyl-L-methionine contacts are provided by residues G187, E210, 237 to 238 (DF), and S252. The substrate site is built by N257 and R303.

The protein belongs to the class I-like SAM-binding methyltransferase superfamily. Cation-independent O-methyltransferase family. In terms of assembly, homodimer and homotetramer in equilibrium.

The catalysed reaction is carminomycin + S-adenosyl-L-methionine = daunorubicin + S-adenosyl-L-homocysteine + H(+). It functions in the pathway antibiotic biosynthesis; daunorubicin biosynthesis. Its pathway is antibiotic biosynthesis; carminomycin biosynthesis. Its activity is regulated as follows. Strongly inhibited by S-adenosyl-L-homocysteine and weakly by adenine and methionine. In terms of biological role, involved in the biosynthesis of the anthracyclines carminomycin and daunorubicin (daunomycin) which are aromatic polyketide antibiotics that exhibit high cytotoxicity and are widely applied in the chemotherapy of a variety of cancers. In vivo, catalyzes the transfer of a methyl group from S-adenosyl-L-methionine to the 4-O-position of carminomycin to form daunorubicin. In vitro, it also methylates the anthracyclines rhodomycin D (10-carbomethoxy-13-deoxycarminomycin), 10-carboxy-13-deoxycarminomycin, 13-deoxy-carminomycin and 13-dihydrocarminomycin at the 4-hydroxyl position. In Streptomyces sp. (strain C5), this protein is Carminomycin 4-O-methyltransferase DauK (dauK).